The chain runs to 472 residues: 3beta,22alpha-dihydroxysteroid 3-dehydrogenase (472 aa).

The chain crosses the membrane as a helical span at residues 1-21 (MAFTAFLLLLSSIAAGFLLLL). Heme is bound at residue Cys-418.

This sequence belongs to the cytochrome P450 family. Heme is required as a cofactor.

It localises to the membrane. The catalysed reaction is (22S)-22-hydroxycampesterol + reduced [NADPH--hemoprotein reductase] + O2 = (22S)-22-hydroxycampest-4-en-3-one + oxidized [NADPH--hemoprotein reductase] + 2 H2O + H(+). It catalyses the reaction 6-deoxoteasterone + reduced [NADPH--hemoprotein reductase] + O2 = 3-dehydro-6-deoxoteasterone + oxidized [NADPH--hemoprotein reductase] + 2 H2O + H(+). The enzyme catalyses 6-deoxycathasterone + reduced [NADPH--hemoprotein reductase] + O2 = (22S,24R)-22-hydroxy-5alpha-ergostan-3-one + oxidized [NADPH--hemoprotein reductase] + 2 H2O + H(+). It carries out the reaction (22R,23R)-22,23-dihydroxycampesterol + reduced [NADPH--hemoprotein reductase] + O2 = (22R,23R)-22,23-dihydroxycampest-4-en-3-one + oxidized [NADPH--hemoprotein reductase] + 2 H2O + H(+). It functions in the pathway plant hormone biosynthesis; brassinosteroid biosynthesis. Its function is as follows. Catalyzes C3-oxidation steps in brassinosteroids biosynthesis. Converts (22S)-22-hydroxycampesterol (22-OHCR) to (22S,24R)-22-hydroxyergost-4-en-3-one (22-hydroxy-campesta-4-en-3-one, 22-OH-4-en-3-one), 6-deoxocathasterone (6-deoxoCT) to (22S,24R)-22-hydroxy-5alpha-ergostan-3-one (22-hydroxy-campesta-3-one, 22-OH-3-one), (22R,23R)-22,23-dihydroxycampesterol (22,23-diOHCR) to (22R,23R)-22,23-dihydroxy-campest-4-en-3-one (22,23-diOH-4-en-3-one), and 6-deoxoteasterone (6-deoxoTE) to 3-dehydro-6-deoxoteasterone (6-deoxo3DT, 6-deoxo-3-DHT). The chain is 3beta,22alpha-dihydroxysteroid 3-dehydrogenase from Arabidopsis thaliana (Mouse-ear cress).